The primary structure comprises 248 residues: Tetraspanin-17 (248 aa).

The Cytoplasmic segment spans residues 1–7 (MSEVRTG). Residues 8–28 (FLTMTTIILISIGLTMMGTGL) traverse the membrane as a helical segment. Residues 29-44 (YQKTTMSSCIRETSSQ) lie on the Extracellular side of the membrane. A helical membrane pass occupies residues 45 to 65 (FTLLGLLLLLIPQIGLYGICC). Over 66 to 69 (RSKR) the chain is Cytoplasmic. A helical transmembrane segment spans residues 70–90 (LFNFFFYGMVVLIIIVSYYSI). At 91–210 (KCSIYNTTFG…ILKAIVHQWK (120 aa)) the chain is on the extracellular side. 3 N-linked (GlcNAc...) asparagine glycosylation sites follow: N96, N109, and N141. Residues 211–231 (YLSMFAYPALVLSCISLAIAW) form a helical membrane-spanning segment. Residues 232-248 (SLKETIHENEDYRGSYS) are Cytoplasmic-facing.

This sequence belongs to the tetraspanin (TM4SF) family.

It localises to the membrane. Its function is as follows. May be involved in the regulation of cell differentiation. This is Tetraspanin-17 (TET17) from Arabidopsis thaliana (Mouse-ear cress).